The chain runs to 506 residues: MEEFQVYLELDRFRQHDFLYPLIFREYIYALAHDHSLNINNRSGLLENVSSANKYKYSSVIVKRFIFRMYQQNHLIISANDSNQKQFFGHNNNLYYEMISAVFAVIAEIPFSLRLVSSLKGKGPAKSHNLQSIHSIFPFLEDTFSHLNYVLDVLIPYPIHLETLVQTLRYWIKDTSSLHLLRFCLYEYCNWNWKSLITQKKSILNPRLFLFLYNSHVCEYESIFFFLRNQSSHLRSTSFGVLLERILFYGKIEHLIKVFVNDFQDILWLVKDPFMHYIRYQGKSILASKDTPLLMNKWKYYFVSLWQCHFYVWSQSRRVRIKQLSKDYLDFLGYFSSLRFNPLVVRSQMLENSFLIDNAIKKFDTKIPIIPMIGSLAKARFCNALGHPISKPAWADSADSDIIDRFVRICRNLSHYYSGSSKKKNLYRIKYILRLSCVKTLARKHKSTVRTFLKRVGSGFLEEFFTEEEEVLSLIFPRAYSASRKLYRGHIWYLDIICINDLVNHE.

This sequence belongs to the intron maturase 2 family. MatK subfamily.

It is found in the plastid. The protein localises to the chloroplast. Its function is as follows. Usually encoded in the trnK tRNA gene intron. Probably assists in splicing its own and other chloroplast group II introns. This Carica papaya (Papaya) protein is Maturase K.